Here is a 500-residue protein sequence, read N- to C-terminus: Lysine--tRNA ligase (500 aa).

Mg(2+) contacts are provided by E410 and E417.

It belongs to the class-II aminoacyl-tRNA synthetase family. In terms of assembly, homodimer. Requires Mg(2+) as cofactor.

Its subcellular location is the cytoplasm. The catalysed reaction is tRNA(Lys) + L-lysine + ATP = L-lysyl-tRNA(Lys) + AMP + diphosphate. This is Lysine--tRNA ligase from Shewanella piezotolerans (strain WP3 / JCM 13877).